A 371-amino-acid polypeptide reads, in one-letter code: Putrescine N-methyltransferase 2 (371 aa).

Composition is skewed to polar residues over residues 1–14 (MEVI…STIF) and 23–70 (GHQN…HDNG). Residues 1–70 (MEVISTNTNG…QNGTISHDNG (70 aa)) form a disordered region. The 238-residue stretch at 82–319 (PGWFSEFSAL…GVIGYMLCST (238 aa)) folds into the PABS domain. S-adenosyl-L-methionine is bound by residues glutamine 113, glutamate 188, and 219–220 (DG). Aspartate 238 acts as the Proton acceptor in catalysis. An S-adenosyl-L-methionine-binding site is contributed by tyrosine 307.

This sequence belongs to the class I-like SAM-binding methyltransferase superfamily. Spermidine/spermine synthase family. As to expression, mainly expressed in roots.

The catalysed reaction is putrescine + S-adenosyl-L-methionine = N-methylputrescine + S-adenosyl-L-homocysteine + H(+). The protein operates within alkaloid biosynthesis; nicotine biosynthesis. Its function is as follows. Involved in the biosynthesis of pyridine alkaloid natural products, leading mainly to the production of anabasine, anatabine, nicotine and nornicotine, effective deterrents against herbivores with antiparasitic and pesticide properties (neurotoxins); nornicotine serves as the precursor in the synthesis of the carcinogen compound N'-nitrosonornicotine (NNN). Methyltransferase that mediates the conversion of putrescine to N-methylputrescine. This chain is Putrescine N-methyltransferase 2, found in Nicotiana attenuata (Coyote tobacco).